The following is a 427-amino-acid chain: Peptidase B (427 aa).

Lys195 and Asp200 together coordinate Mn(2+). Lys207 is an active-site residue. Mn(2+) is bound by residues Asp218, Asp277, and Glu279. Arg281 is an active-site residue.

This sequence belongs to the peptidase M17 family. In terms of assembly, homohexamer. Requires Mn(2+) as cofactor.

The protein resides in the cytoplasm. The enzyme catalyses Release of an N-terminal amino acid, Xaa, from a peptide or arylamide. Xaa is preferably Glu or Asp but may be other amino acids, including Leu, Met, His, Cys and Gln.. Functionally, probably plays an important role in intracellular peptide degradation. This Escherichia coli (strain UTI89 / UPEC) protein is Peptidase B.